Here is a 190-residue protein sequence, read N- to C-terminus: ATP synthase subunit C lysine N-methyltransferase (190 aa).

Belongs to the ANT/ATPSC lysine N-methyltransferase family.

Its subcellular location is the mitochondrion. The enzyme catalyses L-lysyl-[protein] + 3 S-adenosyl-L-methionine = N(6),N(6),N(6)-trimethyl-L-lysyl-[protein] + 3 S-adenosyl-L-homocysteine + 3 H(+). Functionally, mitochondrial protein-lysine N-methyltransferase that trimethylates ATP synthase subunit C. Trimethylation is required for proper incorporation of the C subunit into the ATP synthase complex and mitochondrial respiration. This Caenorhabditis elegans protein is ATP synthase subunit C lysine N-methyltransferase.